Consider the following 653-residue polypeptide: MGKVVGIDLGTTNSCVSIMEGGEPKVIENSEGVRTTPSMVAFTNQGERLVGQAAKRQAVTNPTNTLYAIKRLIGRRFSDPLTAKDQGLVPYKIVKADNGDAWVEADGKKMSPSECSAMILQKMKQTAEDYLGESVSEAVITVPAYFNDAQRQATKDAGRIAGLEVLRIINEPTAAALAYGLDKKDGQTIAVFDLGGGTFDISILEIGDGVFEVKSTNGDTFLGGEDFDMAIIDYLADQFKKENSIDLRKDSMALQRLKEAAEKAKIELSSSNQTDINLPFITADASGPKHLNLSLTRAKLESLVDELVQRTLAPCRTALKDAGMTAADIDEVILVGGMTRMPKVQAVVGQFFGKEPHKGVNPDEVVAIGAAIQGGVLKGEVQDVLLLDVTPLSLGIETLGGVFTKLIEKNTTVPTRKSQVFSTAADNQSAVTIRVAQGEREMFSDNKTLGQFDLVGIAPAPRGMPQIEVTFDIDANGMVHVSAKDKGTGKEQSIHIEASGGLTSEEIDRMVHEAESHAEEDAKKRALIEARNNADSLVYSSEKSLKEHSDKLDDALKNQITAAIEDLKAVMPKEDPEAISSKTQALMELSMKMGEQIYKENPEAAGMDPEAAAHAAGMHGGAATGGGDGANKHGKGAEDVVEAEFEEVNDDKK.

T198 is modified (phosphothreonine; by autocatalysis). Over residues 608-617 (DPEAAAHAAG) the composition is skewed to low complexity. A disordered region spans residues 608–653 (DPEAAAHAAGMHGGAATGGGDGANKHGKGAEDVVEAEFEEVNDDKK). A compositionally biased stretch (gly residues) spans 618–629 (MHGGAATGGGDG). Residues 639–653 (DVVEAEFEEVNDDKK) show a composition bias toward acidic residues.

The protein belongs to the heat shock protein 70 family.

In terms of biological role, acts as a chaperone. This Magnetococcus marinus (strain ATCC BAA-1437 / JCM 17883 / MC-1) protein is Chaperone protein DnaK.